A 214-amino-acid polypeptide reads, in one-letter code: Ribonuclease T (214 aa).

The region spanning 20–195 (VVVDVETAGF…YDTQKTAELF (176 aa)) is the Exonuclease domain. The Mg(2+) site is built by Asp-23, Glu-25, His-182, and Asp-187. His-182 functions as the Proton donor/acceptor in the catalytic mechanism.

It belongs to the RNase T family. In terms of assembly, homodimer. Requires Mg(2+) as cofactor.

Trims short 3' overhangs of a variety of RNA species, leaving a one or two nucleotide 3' overhang. Responsible for the end-turnover of tRNA: specifically removes the terminal AMP residue from uncharged tRNA (tRNA-C-C-A). Also appears to be involved in tRNA biosynthesis. The polypeptide is Ribonuclease T (Vibrio parahaemolyticus serotype O3:K6 (strain RIMD 2210633)).